Reading from the N-terminus, the 338-residue chain is 1-aminocyclopropane-1-carboxylate deaminase (338 aa).

The residue at position 51 (lysine 51) is an N6-(pyridoxal phosphate)lysine. Residue serine 78 is the Nucleophile of the active site.

Belongs to the ACC deaminase/D-cysteine desulfhydrase family. As to quaternary structure, homotrimer. The cofactor is pyridoxal 5'-phosphate.

The catalysed reaction is 1-aminocyclopropane-1-carboxylate + H2O = 2-oxobutanoate + NH4(+). Its function is as follows. Catalyzes a cyclopropane ring-opening reaction, the irreversible conversion of 1-aminocyclopropane-1-carboxylate (ACC) to ammonia and alpha-ketobutyrate. Allows growth on ACC as a nitrogen source. This chain is 1-aminocyclopropane-1-carboxylate deaminase, found in Burkholderia multivorans (strain ATCC 17616 / 249).